The sequence spans 149 residues: MTQQIKLLVLNGPNLNLLGQREPEVYGSKTLDDIIKALTDEAALQNVALSHLQSNREYELIEKIHDAFEKIDFIIINPAAFTHTSVALRDALLGVNIPFIEVHLSNVHARESFRHHSYLSDIAQGVICGLGAKGYSFALQSAIGKLRNI.

Catalysis depends on tyrosine 26, which acts as the Proton acceptor. Substrate contacts are provided by asparagine 77, histidine 83, and aspartate 90. The active-site Proton donor is histidine 103. Substrate-binding positions include leucine 104–serine 105 and arginine 114.

It belongs to the type-II 3-dehydroquinase family. In terms of assembly, homododecamer.

It carries out the reaction 3-dehydroquinate = 3-dehydroshikimate + H2O. The protein operates within metabolic intermediate biosynthesis; chorismate biosynthesis; chorismate from D-erythrose 4-phosphate and phosphoenolpyruvate: step 3/7. Catalyzes a trans-dehydration via an enolate intermediate. The protein is 3-dehydroquinate dehydratase of Psychromonas ingrahamii (strain DSM 17664 / CCUG 51855 / 37).